We begin with the raw amino-acid sequence, 228 residues long: Urease accessory protein UreF (228 aa).

The protein belongs to the UreF family. In terms of assembly, ureD, UreF and UreG form a complex that acts as a GTP-hydrolysis-dependent molecular chaperone, activating the urease apoprotein by helping to assemble the nickel containing metallocenter of UreC. The UreE protein probably delivers the nickel.

The protein localises to the cytoplasm. In terms of biological role, required for maturation of urease via the functional incorporation of the urease nickel metallocenter. This chain is Urease accessory protein UreF, found in Prochlorococcus marinus (strain MIT 9301).